Consider the following 103-residue polypeptide: Large ribosomal subunit protein uL24 (103 aa).

This sequence belongs to the universal ribosomal protein uL24 family. Part of the 50S ribosomal subunit.

In terms of biological role, one of two assembly initiator proteins, it binds directly to the 5'-end of the 23S rRNA, where it nucleates assembly of the 50S subunit. One of the proteins that surrounds the polypeptide exit tunnel on the outside of the subunit. The sequence is that of Large ribosomal subunit protein uL24 from Haemophilus influenzae (strain ATCC 51907 / DSM 11121 / KW20 / Rd).